The following is a 448-amino-acid chain: Probable glycine dehydrogenase (decarboxylating) subunit 1 (448 aa).

The protein belongs to the GcvP family. N-terminal subunit subfamily. In terms of assembly, the glycine cleavage system is composed of four proteins: P, T, L and H. In this organism, the P 'protein' is a heterodimer of two subunits.

The catalysed reaction is N(6)-[(R)-lipoyl]-L-lysyl-[glycine-cleavage complex H protein] + glycine + H(+) = N(6)-[(R)-S(8)-aminomethyldihydrolipoyl]-L-lysyl-[glycine-cleavage complex H protein] + CO2. Functionally, the glycine cleavage system catalyzes the degradation of glycine. The P protein binds the alpha-amino group of glycine through its pyridoxal phosphate cofactor; CO(2) is released and the remaining methylamine moiety is then transferred to the lipoamide cofactor of the H protein. The polypeptide is Probable glycine dehydrogenase (decarboxylating) subunit 1 (Staphylococcus aureus (strain COL)).